The sequence spans 353 residues: Photosystem II protein D1 (353 aa).

An N-acetylthreonine modification is found at threonine 2. Threonine 2 is modified (phosphothreonine). Helical transmembrane passes span 29 to 46, 118 to 133, and 142 to 156; these read YIGW…TATS, HFLL…EWEL, and WIAV…AATA. Histidine 118 contacts chlorophyll a. Tyrosine 126 lines the pheophytin a pocket. Residues aspartate 170 and glutamate 189 each contribute to the [CaMn4O5] cluster site. The chain crosses the membrane as a helical span at residues 197–218; sequence FHMLGVAGVFGGSLFSAMHGSL. A chlorophyll a-binding site is contributed by histidine 198. A quinone is bound by residues histidine 215 and 264-265; that span reads SF. Histidine 215 lines the Fe cation pocket. Histidine 272 serves as a coordination point for Fe cation. A helical membrane pass occupies residues 274 to 288; it reads FLAAWPVIGIWFTSL. The [CaMn4O5] cluster site is built by histidine 332, glutamate 333, aspartate 342, and alanine 344. The propeptide occupies 345–353; that stretch reads AVEAPSTIG.

Belongs to the reaction center PufL/M/PsbA/D family. In terms of assembly, PSII is composed of 1 copy each of membrane proteins PsbA, PsbB, PsbC, PsbD, PsbE, PsbF, PsbH, PsbI, PsbJ, PsbK, PsbL, PsbM, PsbT, PsbX, PsbY, PsbZ, Psb30/Ycf12, at least 3 peripheral proteins of the oxygen-evolving complex and a large number of cofactors. It forms dimeric complexes. Requires The D1/D2 heterodimer binds P680, chlorophylls that are the primary electron donor of PSII, and subsequent electron acceptors. It shares a non-heme iron and each subunit binds pheophytin, quinone, additional chlorophylls, carotenoids and lipids. D1 provides most of the ligands for the Mn4-Ca-O5 cluster of the oxygen-evolving complex (OEC). There is also a Cl(-1) ion associated with D1 and D2, which is required for oxygen evolution. The PSII complex binds additional chlorophylls, carotenoids and specific lipids. as cofactor. Tyr-161 forms a radical intermediate that is referred to as redox-active TyrZ, YZ or Y-Z. Post-translationally, C-terminally processed by CTPA; processing is essential to allow assembly of the oxygen-evolving complex and thus photosynthetic growth.

It is found in the plastid. Its subcellular location is the chloroplast thylakoid membrane. It carries out the reaction 2 a plastoquinone + 4 hnu + 2 H2O = 2 a plastoquinol + O2. Functionally, photosystem II (PSII) is a light-driven water:plastoquinone oxidoreductase that uses light energy to abstract electrons from H(2)O, generating O(2) and a proton gradient subsequently used for ATP formation. It consists of a core antenna complex that captures photons, and an electron transfer chain that converts photonic excitation into a charge separation. The D1/D2 (PsbA/PsbD) reaction center heterodimer binds P680, the primary electron donor of PSII as well as several subsequent electron acceptors. The protein is Photosystem II protein D1 of Landoltia punctata (Dotted duckmeat).